We begin with the raw amino-acid sequence, 283 residues long: Vitamin K epoxide reductase homolog (283 aa).

The Cytoplasmic segment spans residues 1–20 (MASYLKLKAQEETWLQRHSR). The chain crosses the membrane as a helical span at residues 21–41 (LILAILAGLGSLLTAYLTYTK). The Periplasmic segment spans residues 42 to 66 (LTEQPAAFCTGDGGCDLVLSSRWAE). Cysteine 50 and cysteine 56 are joined by a disulfide. A quinone is bound at residue 59–65 (VLSSRWA). The helical transmembrane segment at 67 to 87 (FLGIPTAAVGLLGFLGVLALA) threads the bilayer. Over 88–102 (VLPDGLPLVKRWRWP) the chain is Cytoplasmic. Residues 103–123 (ALFGLVSAMTAFEMYMLYLMV) form a helical membrane-spanning segment. Residue 111-122 (MTAFEMYMLYLM) participates in a quinone binding. At 124–128 (AVLRQ) the chain is on the periplasmic side. Residues 129–149 (FCMYCTTAIILVAGLGLVTVL) form a helical membrane-spanning segment. Cysteine 130 and cysteine 133 are disulfide-bonded. The Cytoplasmic portion of the chain corresponds to 150-158 (GHRWLDGGK). A helical transmembrane segment spans residues 159-179 (LAFSYILVAFLTLVTTIGVYA). The Periplasmic portion of the chain corresponds to 180-283 (NQVPPPSPLA…ASGYPLEEGR (104 aa)). Residues 186 to 283 (SPLAVGLAAH…ASGYPLEEGR (98 aa)) are thioredoxin-like domain. 2 cysteine pairs are disulfide-bonded: cysteine 209-cysteine 212 and cysteine 231-cysteine 244.

It belongs to the VKOR family.

The protein localises to the membrane. Its activity is regulated as follows. Inhibited by ferulenol. In terms of biological role, thiol-disulfide oxidoreductase that catalyzes vitamin K-dependent disulfide bond formation in periplasmic target proteins. This chain is Vitamin K epoxide reductase homolog, found in Synechococcus sp. (strain JA-2-3B'a(2-13)) (Cyanobacteria bacterium Yellowstone B-Prime).